A 237-amino-acid chain; its full sequence is Phosphoribosylaminoimidazole-succinocarboxamide synthase (237 aa).

Belongs to the SAICAR synthetase family.

The catalysed reaction is 5-amino-1-(5-phospho-D-ribosyl)imidazole-4-carboxylate + L-aspartate + ATP = (2S)-2-[5-amino-1-(5-phospho-beta-D-ribosyl)imidazole-4-carboxamido]succinate + ADP + phosphate + 2 H(+). Its pathway is purine metabolism; IMP biosynthesis via de novo pathway; 5-amino-1-(5-phospho-D-ribosyl)imidazole-4-carboxamide from 5-amino-1-(5-phospho-D-ribosyl)imidazole-4-carboxylate: step 1/2. The sequence is that of Phosphoribosylaminoimidazole-succinocarboxamide synthase from Klebsiella pneumoniae (strain 342).